Reading from the N-terminus, the 191-residue chain is Adenylate kinase (191 aa).

12–17 (GSGKTT) is an ATP binding site. An NMP region spans residues 34-63 (STGDLLRAESAKKTERGLLIEKFTSQGELV). AMP-binding positions include Thr35, Arg40, 61 to 63 (ELV), 88 to 91 (GYPR), and Gln95. The tract at residues 130-136 (GRSRGAD) is LID. Residue Arg131 coordinates ATP. AMP contacts are provided by Arg133 and Arg145. Arg173 provides a ligand contact to ATP.

It belongs to the adenylate kinase family. As to quaternary structure, monomer.

The protein resides in the cytoplasm. The catalysed reaction is AMP + ATP = 2 ADP. It functions in the pathway purine metabolism; AMP biosynthesis via salvage pathway; AMP from ADP: step 1/1. Its function is as follows. Catalyzes the reversible transfer of the terminal phosphate group between ATP and AMP. Plays an important role in cellular energy homeostasis and in adenine nucleotide metabolism. The chain is Adenylate kinase from Helicobacter pylori (strain ATCC 700392 / 26695) (Campylobacter pylori).